The chain runs to 452 residues: MVLNIKAPENIVLKPTITVFGVGGAGSNAVNNMISANLQGANFVVANTDAQSLEHSLCTNKIQLGVSTTRGLGAGASPEVGALAAQESESEIRSYLENSNMVFITAGMGGGTGTGSAPVIARIAKELGILTVGVVTKPFHFEGGHRMKTADKGLIELQQFVDTLIVIPNQNLFRIANEQTTFADAFKMADDILHAGVRGVTDLMIMPGLINLDFADIKAVMSEMGKAMMGTGEASGEDRAIKAAESAISNPLLDHSSMCGARGVLINITGGSDMTLFEVDNAANRIREEVDNLDANIIFGSTFNPELKGIIRVSVVATGIDADKVPTYKPAIAETTNIVPEETYNEPIVQPTQIEEIPDFNSYSTENIEITDSPINQNFIGNEKELGLHANSFNKSEDDSPKPSFLGKIWGSLRASNNQTLERKNIVVNTLDQDNKESDIHDIPAFLRKKRD.

Residues G24–N28, G111–G113, E142, R146, and D190 each bind GTP.

It belongs to the FtsZ family. In terms of assembly, homodimer. Polymerizes to form a dynamic ring structure in a strictly GTP-dependent manner. Interacts directly with several other division proteins.

The protein localises to the cytoplasm. Essential cell division protein that forms a contractile ring structure (Z ring) at the future cell division site. The regulation of the ring assembly controls the timing and the location of cell division. One of the functions of the FtsZ ring is to recruit other cell division proteins to the septum to produce a new cell wall between the dividing cells. Binds GTP and shows GTPase activity. The chain is Cell division protein FtsZ from Rickettsia felis (strain ATCC VR-1525 / URRWXCal2) (Rickettsia azadi).